The following is a 46-amino-acid chain: Large ribosomal subunit protein bL36 (46 aa).

The protein belongs to the bacterial ribosomal protein bL36 family.

The polypeptide is Large ribosomal subunit protein bL36 (Photorhabdus laumondii subsp. laumondii (strain DSM 15139 / CIP 105565 / TT01) (Photorhabdus luminescens subsp. laumondii)).